Reading from the N-terminus, the 369-residue chain is Chaperone protein DnaJ (369 aa).

The 67-residue stretch at 7–73 folds into the J domain; sequence DYYEILGVPR…QKRAMYDRFG (67 aa). The CR-type zinc-finger motif lies at 143-225; that stretch reads GAEIPVEYER…CGGSGRVLRK (83 aa). Residues C156, C159, C173, C176, C199, C202, C213, and C216 each contribute to the Zn(2+) site. CXXCXGXG motif repeat units follow at residues 156-163, 173-180, 199-206, and 213-220; these read CPRCGGTG, CPSCGGTG, CERCGGTG, and CHECGGSG.

The protein belongs to the DnaJ family. In terms of assembly, homodimer. The cofactor is Zn(2+).

Its subcellular location is the cytoplasm. In terms of biological role, participates actively in the response to hyperosmotic and heat shock by preventing the aggregation of stress-denatured proteins and by disaggregating proteins, also in an autonomous, DnaK-independent fashion. Unfolded proteins bind initially to DnaJ; upon interaction with the DnaJ-bound protein, DnaK hydrolyzes its bound ATP, resulting in the formation of a stable complex. GrpE releases ADP from DnaK; ATP binding to DnaK triggers the release of the substrate protein, thus completing the reaction cycle. Several rounds of ATP-dependent interactions between DnaJ, DnaK and GrpE are required for fully efficient folding. Also involved, together with DnaK and GrpE, in the DNA replication of plasmids through activation of initiation proteins. In Thermotoga petrophila (strain ATCC BAA-488 / DSM 13995 / JCM 10881 / RKU-1), this protein is Chaperone protein DnaJ.